A 512-amino-acid chain; its full sequence is GMP synthase [glutamine-hydrolyzing] (512 aa).

The Glutamine amidotransferase type-1 domain maps to 5-195 (GIVILDFGSQ…IFGIAKAEKN (191 aa)). The active-site Nucleophile is the C82. Residues H169 and E171 contribute to the active site. One can recognise a GMPS ATP-PPase domain in the interval 196-387 (WSMENYIEST…LGIPDYMVDR (192 aa)). ATP is bound at residue 223 to 229 (SGGVDSS).

Homodimer.

The catalysed reaction is XMP + L-glutamine + ATP + H2O = GMP + L-glutamate + AMP + diphosphate + 2 H(+). Its pathway is purine metabolism; GMP biosynthesis; GMP from XMP (L-Gln route): step 1/1. Catalyzes the synthesis of GMP from XMP. The sequence is that of GMP synthase [glutamine-hydrolyzing] from Fusobacterium nucleatum subsp. nucleatum (strain ATCC 25586 / DSM 15643 / BCRC 10681 / CIP 101130 / JCM 8532 / KCTC 2640 / LMG 13131 / VPI 4355).